Here is a 613-residue protein sequence, read N- to C-terminus: MSKQFVRSAKNMMKGYSSTQVLVRDATANDSRTPSIDTLDDLAQRSYDSVDFFEIMDMLDKRLNDKGKYWRHVAKSLTVLDYLVRFGSENCVLWCRENFYVIKTLREFRHENESGFDEGQIIRVKAKELVSLLNDEERLREERSMNTRNRRANRAARPRPRRQRTRSNPHDSSPSYQDDLEKALEESRITAQEDEQRRRELAQYDDEDPDFQAALQLSKEEEELKQLQELQRLQKQQQSLSQFQAPLQQQQPQQQPAYYDIFGNPISQDEYLQYQYQQDQEQAMAQQRWLDQQQEQQQLAEQQYFQQQQQAAAAASALQQQQTAANMQQQQQQPADFQQPLPTGSNNPFSMDNLERQKQEQQHAQLQRQQEEARQQQEQLKLQQLQRQQQEEAQLHQKRQEEAQLQQQQAQLLQQQAQFQQQQPLKQTRTGNQSISDKYSDLNTLLATGTGIDTFGNTGEARIPAQHTKTGTFINSQGTGYKQVTNEPKNNPFLSNQYTGLPSTNIVPTQTGYGFGNQPQSPPTNSPQQNPTGISYSQPQQQQQPQQQPQYMQNFQQQQPQYAQNFQQQPQYTQNYQQQPQYIQPHQQQQQQQQQQQQQQGYTPDQGVSLIDL.

The 133-residue stretch at 11–143 folds into the ENTH domain; that stretch reads NMMKGYSSTQ…NDEERLREER (133 aa). 3 disordered regions span residues 140-208, 323-351, and 356-375; these read REER…DDED, TAAN…PFSM, and RQKQ…EARQ. The span at 148-167 shows a compositional bias: basic residues; it reads RNRRANRAARPRPRRQRTRS. Thr-165 carries the post-translational modification Phosphothreonine. The residue at position 167 (Ser-167) is a Phosphoserine. UIM domains follow at residues 175 to 194 and 206 to 225; these read SYQD…AQED and DEDP…EELK. A compositionally biased stretch (basic and acidic residues) spans 179–188; sequence DLEKALEESR. The segment covering 323-339 has biased composition (low complexity); the sequence is TAANMQQQQQQPADFQQ. Polar residues predominate over residues 340 to 350; that stretch reads PLPTGSNNPFS. Lys-426 participates in a covalent cross-link: Glycyl lysine isopeptide (Lys-Gly) (interchain with G-Cter in ubiquitin). Residue Thr-430 is modified to Phosphothreonine. Ser-434 is modified (phosphoserine). Residues Thr-450, Thr-468, and Thr-470 each carry the phosphothreonine modification. The segment covering 471-512 has biased composition (polar residues); the sequence is GTFINSQGTGYKQVTNEPKNNPFLSNQYTGLPSTNIVPTQTG. Residues 471 to 613 form a disordered region; sequence GTFINSQGTG…PDQGVSLIDL (143 aa). Positions 526-600 are enriched in low complexity; it reads SPQQNPTGIS…QQQQQQQQQQ (75 aa).

This sequence belongs to the epsin family. Post-translationally, phosphorylated by PRK1.

It localises to the cytoplasm. The protein localises to the membrane. Functionally, binds to membranes enriched in phosphatidylinositol 3,5-bisphosphate (PtdIns(3,5)P2) and phosphatidylinositol 4,5-bisphosphate (PtdIns(4,5)P2). Required for endocytosis and localization of actin. In Saccharomyces cerevisiae (strain ATCC 204508 / S288c) (Baker's yeast), this protein is Epsin-2 (ENT2).